Reading from the N-terminus, the 159-residue chain is Phosphopantetheine adenylyltransferase (159 aa).

Threonine 10 provides a ligand contact to substrate. ATP-binding positions include 10–11 (TF) and histidine 18. Residues lysine 42, methionine 74, and arginine 88 each coordinate substrate. ATP-binding positions include 89–91 (GLR), glutamate 99, and 124–130 (WSFISSS).

This sequence belongs to the bacterial CoaD family. Homohexamer. Mg(2+) is required as a cofactor.

Its subcellular location is the cytoplasm. The enzyme catalyses (R)-4'-phosphopantetheine + ATP + H(+) = 3'-dephospho-CoA + diphosphate. Its pathway is cofactor biosynthesis; coenzyme A biosynthesis; CoA from (R)-pantothenate: step 4/5. In terms of biological role, reversibly transfers an adenylyl group from ATP to 4'-phosphopantetheine, yielding dephospho-CoA (dPCoA) and pyrophosphate. The sequence is that of Phosphopantetheine adenylyltransferase from Yersinia pseudotuberculosis serotype I (strain IP32953).